Consider the following 362-residue polypeptide: MASLINVSSLVNRVKLDQSIIGSDEINKLYGSDAPLVFKDEVKMVIPGNAEGEAIKLQANILTADRLQSIRNAKVNGKEAAYLHLGFVPIAIRSLLPSGNEQIWGRCALVDTSRTRAETAVIDEFEFKFTKKQPFAAKLLTINAAVDINCKVSVGSIQVLLELHGVDLREERSVAAIITGLTCTPTNKMVLLHKIECDTPKWSLCNIIEQVEDEEESKKAFENMFNASSSNLIDLGQEQWLDEGKRTPLIGSLAIKGFGRKVMPVRRRNLTTRNLMKDYVSHVKSETASLKRSQSGRDWGNDRLRKYLEEQALEQARSSTDHQLVKAPKFKTIEVTGLETVHDLKDKIDKAESSTASDTGTK.

Functionally, suppressor of viral-induced RNA silencing. The sequence is that of Putative movement protein from Citrus (CLBV).